The following is a 699-amino-acid chain: Ubiquitin-like modifier-activating enzyme atg7 (699 aa).

The GXGXXG motif signature appears at 370–375 (GAGTLG). The Glycyl thioester intermediate role is filled by C550. Residues 680–699 (MQWSEDEEGMDEEEGEGELI) form a disordered region. Residues 682–699 (WSEDEEGMDEEEGEGELI) show a composition bias toward acidic residues.

Belongs to the ATG7 family. Homodimer.

It is found in the cytoplasm. The protein resides in the preautophagosomal structure. In terms of biological role, E1-like activating enzyme involved in the 2 ubiquitin-like systems required for cytoplasm to vacuole transport (Cvt) and autophagy. Activates atg12 for its conjugation with apg-4/atg5 and apg-6/atg8 for its conjugation with phosphatidylethanolamine. Both systems are needed for the apg-6/atg8 association to Cvt vesicles and autophagosomes membranes. Autophagy is essential for maintenance of amino acid levels and protein synthesis under nitrogen starvation. Required for selective autophagic degradation of the nucleus (nucleophagy) as well as for mitophagy which contributes to regulate mitochondrial quantity and quality by eliminating the mitochondria to a basal level to fulfill cellular energy requirements and preventing excess ROS production. Plays a role in the regulation of filamentous growth and chronological longevity. The protein is Ubiquitin-like modifier-activating enzyme atg7 (apg-5) of Neurospora crassa (strain ATCC 24698 / 74-OR23-1A / CBS 708.71 / DSM 1257 / FGSC 987).